A 160-amino-acid chain; its full sequence is Phosphopantetheine adenylyltransferase (160 aa).

Thr9 is a substrate binding site. ATP-binding positions include 9–10 (TF) and His17. Substrate is bound by residues Lys41, Leu73, and Arg87. Residues 88-90 (GLR), Glu98, and 123-129 (LSYISST) each bind ATP.

It belongs to the bacterial CoaD family. Homohexamer. Mg(2+) is required as a cofactor.

Its subcellular location is the cytoplasm. The enzyme catalyses (R)-4'-phosphopantetheine + ATP + H(+) = 3'-dephospho-CoA + diphosphate. The protein operates within cofactor biosynthesis; coenzyme A biosynthesis; CoA from (R)-pantothenate: step 4/5. Reversibly transfers an adenylyl group from ATP to 4'-phosphopantetheine, yielding dephospho-CoA (dPCoA) and pyrophosphate. This chain is Phosphopantetheine adenylyltransferase, found in Marinobacter nauticus (strain ATCC 700491 / DSM 11845 / VT8) (Marinobacter aquaeolei).